The chain runs to 334 residues: uncharacterized protein (334 aa).

The protein belongs to the Gfo/Idh/MocA family.

This is an uncharacterized protein from Rhizobium meliloti (Ensifer meliloti).